A 218-amino-acid polypeptide reads, in one-letter code: Ribose-5-phosphate isomerase A (218 aa).

Substrate-binding positions include 28–31 (TGST), 81–84 (DGAD), and 94–97 (KGGG). Catalysis depends on Glu103, which acts as the Proton acceptor. Substrate is bound at residue Lys121.

Belongs to the ribose 5-phosphate isomerase family. In terms of assembly, homodimer.

It carries out the reaction aldehydo-D-ribose 5-phosphate = D-ribulose 5-phosphate. It functions in the pathway carbohydrate degradation; pentose phosphate pathway; D-ribose 5-phosphate from D-ribulose 5-phosphate (non-oxidative stage): step 1/1. Functionally, catalyzes the reversible conversion of ribose-5-phosphate to ribulose 5-phosphate. This Yersinia pseudotuberculosis serotype IB (strain PB1/+) protein is Ribose-5-phosphate isomerase A.